The sequence spans 160 residues: CXXC motif containing zinc binding protein (160 aa).

Zn(2+) is bound by residues Cys33, Cys36, Cys67, and Cys70.

It belongs to the UPF0587 family.

This is CXXC motif containing zinc binding protein (czib) from Xenopus laevis (African clawed frog).